The following is a 702-amino-acid chain: Translation factor GUF1 homolog, chloroplastic (702 aa).

The span at 1 to 30 (MASAAPASRGAARASTAARDAPFAAAARGP) shows a compositional bias: low complexity. A disordered region spans residues 1 to 41 (MASAAPASRGAARASTAARDAPFAAAARGPGRFRRDGNGRN). In terms of domain architecture, tr-type G spans 87–283 (SQIRNFSIIA…NIVKMIPPPP (197 aa)). Residues 96–103 (AHIDHGKS), 162–166 (DTPGH), and 216–219 (NKID) contribute to the GTP site.

The protein belongs to the TRAFAC class translation factor GTPase superfamily. Classic translation factor GTPase family. LepA subfamily.

The protein resides in the plastid. It localises to the chloroplast. The enzyme catalyses GTP + H2O = GDP + phosphate + H(+). Its function is as follows. Promotes chloroplast protein synthesis. May act as a fidelity factor of the translation reaction, by catalyzing a one-codon backward translocation of tRNAs on improperly translocated ribosomes. This chain is Translation factor GUF1 homolog, chloroplastic, found in Micromonas pusilla (strain CCMP1545) (Picoplanktonic green alga).